Consider the following 361-residue polypeptide: MSKFSFNIHHQHKKARSGIIVTAHGEMRTPAFMPVGTRGTVKAMLPESVAETGADILLGNTYHLMLQPTAERIVLLGGLHKFMNWDKPILTDSGGFQVMSLSKLRKITEEGVSFSSHINGDKYMLTPERSTEIQYLLGSTITMAFDECTPYPATFEEAKTSMQLTTRWANRSRNAFVKREGYAQFGIIQGSVYEELREQSAKDLVELDFEGYAIGGLAVGEGQELMFKVLDYAPDFLPQNKPRYLMGVGKPADIIGAVSRGIDMFDCVIPTRAGRNGQAFTKYGTVNIRNSKYADDNKPLEHDCLCPACRNYSKAYLHHLVRIGEILGSMLMTWHNLTYFQNLMSRIREYIKLGKDFDFDS.

Aspartate 92 acts as the Proton acceptor in catalysis. Substrate is bound by residues 92-96 (DSGGF), aspartate 146, glutamine 189, and glycine 216. Residues 247–253 (GVGKPAD) form an RNA binding region. The Nucleophile role is filled by aspartate 266. Residues 271–275 (TRAGR) are RNA binding; important for wobble base 34 recognition. Cysteine 304, cysteine 306, cysteine 309, and histidine 335 together coordinate Zn(2+).

Belongs to the queuine tRNA-ribosyltransferase family. In terms of assembly, homodimer. Within each dimer, one monomer is responsible for RNA recognition and catalysis, while the other monomer binds to the replacement base PreQ1. Zn(2+) serves as cofactor.

It carries out the reaction 7-aminomethyl-7-carbaguanine + guanosine(34) in tRNA = 7-aminomethyl-7-carbaguanosine(34) in tRNA + guanine. Its pathway is tRNA modification; tRNA-queuosine biosynthesis. Functionally, catalyzes the base-exchange of a guanine (G) residue with the queuine precursor 7-aminomethyl-7-deazaguanine (PreQ1) at position 34 (anticodon wobble position) in tRNAs with GU(N) anticodons (tRNA-Asp, -Asn, -His and -Tyr). Catalysis occurs through a double-displacement mechanism. The nucleophile active site attacks the C1' of nucleotide 34 to detach the guanine base from the RNA, forming a covalent enzyme-RNA intermediate. The proton acceptor active site deprotonates the incoming PreQ1, allowing a nucleophilic attack on the C1' of the ribose to form the product. After dissociation, two additional enzymatic reactions on the tRNA convert PreQ1 to queuine (Q), resulting in the hypermodified nucleoside queuosine (7-(((4,5-cis-dihydroxy-2-cyclopenten-1-yl)amino)methyl)-7-deazaguanosine). The chain is Queuine tRNA-ribosyltransferase from Rickettsia massiliae (strain Mtu5).